We begin with the raw amino-acid sequence, 320 residues long: Stress-involved WYL domain-containing regulator (320 aa).

The HTH deoR-type domain occupies 7 to 65 (TTGRVVQLLGLLQSRRVWTGEELAERLGVTGRSVRRDIERLRELGYPVHASKGQGGGYQ). The H-T-H motif DNA-binding region spans 24–43 (WTGEELAERLGVTGRSVRRD). One can recognise a WYL domain in the interval 139–218 (DTAVAPDVLM…SDVRATGTTF (80 aa)). The interval 245–320 (VRYFAPEKVV…MADRLRRAVR (76 aa)) is WCX domain.

Homodimer.

Transcriptional activator. Acts as a transcriptional activator of the MSMEG_1357-56 operon upon genotoxic stress. Controls adjacent genes that belong to the DinB/YfiT-like putative metalloenzymes superfamily by upregulating their expression in response to various genotoxic stress conditions, including exposure to H(2)O(2) or the natural antibiotic zeocin, as well as mitomycin C (MMC), diamide and UVC radiation. Upon genotoxic stress, upregulates two genes encoding proteins of the DinB/YfiT-like putative metalloenzymes superfamily, MSMEG_1357 and MSMEG_1356. Binds different forms of single-stranded DNA (ssDNA) with high affinity, primarily through its characteristic WYL domain. Binds nucleic acids with single-stranded regions, such as polyT 20mer ssDNA, 5' tailed, 3' tailed and fork DNA, but not ssRNA. This chain is Stress-involved WYL domain-containing regulator, found in Mycolicibacterium smegmatis (strain ATCC 700084 / mc(2)155) (Mycobacterium smegmatis).